Here is a 636-residue protein sequence, read N- to C-terminus: MGKVVGIDLGTTNSEVAVMQGGEPVVIPSAEGSTLIPSVVAINKNGERIVGRQAKNQAILNPENTVYSIKRFMGRKWGEPAGRELPVEADAKRKPYKVIQGNNNEVRVVMGDKDFSPPEVSAMILQKLKSDAEAYLGEKVTEAVITVPAYFNDAQRQATKDAGAIAGLKVLRIINEPTAAALAYGLDKKKDETIAVYDLGGGTFDISILELGEGTFQVKSTAGDTHLGGDDFDQKIIDWLIAEYKKDQGIDLSKDKTALQRLKEAAEKAKIELSTVQQTEINLPFITADASGPKHLNIILTRSKLEQMVMDLVEKSLEPCRQALKDSGKTSAEINEVILVGGQTRMPLVQQKVKDFFGKEPNKGVNPDEVVAIGAAIQAGVLKGEVSDVLLLDVIPLTLGIETLGGVSTALITRNTTIPTSKSQVFSTAADNQPSVEIHVLQGERPMAADNRTLGRFMLDGILPAPRGVPQIEVTFDIDANGMLSVKAKDKGTGREQKITITASSGLSKEEVEKMTREAEAHAVEDTKRKEEIEARNVADNLAYNAEKTLRDNKDKIPAELNTELESKIAAVRTALQGNDVEAIKKTTQELSTALQSVGSAVYGKQQEGAPAQEEPSAEGKKADDEGTVEGEFREV.

Thr203 is subject to Phosphothreonine; by autocatalysis. A disordered region spans residues 602-636 (VYGKQQEGAPAQEEPSAEGKKADDEGTVEGEFREV). The segment covering 618–636 (AEGKKADDEGTVEGEFREV) has biased composition (basic and acidic residues).

The protein belongs to the heat shock protein 70 family.

Its function is as follows. Acts as a chaperone. This Dehalococcoides mccartyi (strain CBDB1) protein is Chaperone protein DnaK.